A 295-amino-acid chain; its full sequence is Probable aspartoacylase (295 aa).

Zn(2+) contacts are provided by H16 and E19. Substrate contacts are provided by residues R58 and 65–66; that span reads NR. H107 contributes to the Zn(2+) binding site. E166 and Y277 together coordinate substrate.

It belongs to the AspA/AstE family. Aspartoacylase subfamily. Zn(2+) is required as a cofactor.

The enzyme catalyses an N-acyl-L-aspartate + H2O = a carboxylate + L-aspartate. In Acaryochloris marina (strain MBIC 11017), this protein is Probable aspartoacylase.